The following is a 481-amino-acid chain: Bindin (481 aa).

Positions 1 to 20 (MGFHQILVTVVALALASVRA) are cleaved as a signal peptide. A propeptide spanning residues 21–245 (EFPSRTDSPT…DSKRGARKKR (225 aa)) is cleaved from the precursor. Basic and acidic residues-rich tracts occupy residues 154–163 (DGDLRKRRES) and 178–189 (RKGDEPAGHTLK). Disordered stretches follow at residues 154-193 (DGDL…DLAP) and 219-243 (GHSP…GARK). Positions 352 to 360 (LRHLRHHSN) are fucose-binding domain. The segment at 376-481 (SAMQEEEEEE…QPYGQGYLQG (106 aa)) is disordered. The span at 379 to 389 (QEEEEEEEEDA) shows a compositional bias: acidic residues. Residues 406–416 (AGFGGGGGGGA) are compositionally biased toward gly residues. 2 stretches are compositionally biased toward low complexity: residues 417-440 (MMSP…MGFP) and 464-481 (GMGM…YLQG).

This sequence belongs to the bindin family.

It localises to the cytoplasmic vesicle. It is found in the secretory vesicle. The protein localises to the acrosome lumen. Species-specific sea urchin sperm protein required for adhesion of sperm to the egg surface during fertilization. Bindin coats the acrosomal process after it is externalized by the acrosome reaction. It binds to sulfated, fucose-containing polysaccharides on the vitelline layer receptor proteoglycans which cover the egg plasma membrane. The sequence is that of Bindin from Strongylocentrotus purpuratus (Purple sea urchin).